The following is a 299-amino-acid chain: Protease HtpX homolog (299 aa).

The next 2 helical transmembrane spans lie at 15-35 (ILLL…GYLF) and 39-59 (GLGG…SMIF). A Zn(2+)-binding site is contributed by histidine 143. Residue glutamate 144 is part of the active site. Zn(2+) is bound at residue histidine 147. The next 2 membrane-spanning stretches (helical) occupy residues 158–178 (IAVA…RMMW) and 198–218 (IIML…ATLV). Position 227 (glutamate 227) interacts with Zn(2+).

The protein belongs to the peptidase M48B family. Zn(2+) is required as a cofactor.

It is found in the cell membrane. This is Protease HtpX homolog from Streptococcus pneumoniae (strain Hungary19A-6).